Reading from the N-terminus, the 246-residue chain is Adenosylcobinamide-GDP ribazoletransferase (246 aa).

Transmembrane regions (helical) follow at residues 34 to 54 (IVTF…VALL), 59 to 79 (CGVP…TGGF), 113 to 133 (GGLA…ELLL), 138 to 158 (PIAA…LLMY), 171 to 191 (LFIG…GVAL), and 194 to 214 (VLLG…IWGL).

The protein belongs to the CobS family. Mg(2+) is required as a cofactor.

It is found in the cell inner membrane. It carries out the reaction alpha-ribazole + adenosylcob(III)inamide-GDP = adenosylcob(III)alamin + GMP + H(+). The catalysed reaction is alpha-ribazole 5'-phosphate + adenosylcob(III)inamide-GDP = adenosylcob(III)alamin 5'-phosphate + GMP + H(+). The protein operates within cofactor biosynthesis; adenosylcobalamin biosynthesis; adenosylcobalamin from cob(II)yrinate a,c-diamide: step 7/7. Functionally, joins adenosylcobinamide-GDP and alpha-ribazole to generate adenosylcobalamin (Ado-cobalamin). Also synthesizes adenosylcobalamin 5'-phosphate from adenosylcobinamide-GDP and alpha-ribazole 5'-phosphate. This chain is Adenosylcobinamide-GDP ribazoletransferase, found in Klebsiella pneumoniae (strain 342).